Consider the following 188-residue polypeptide: Adenylate kinase (188 aa).

11–16 is an ATP binding site; it reads GAGKGT. The tract at residues 31-60 is NMP; it reads STGDIFRANIKDQTELGREAQRYTDAGNLV. AMP-binding positions include Thr-32, Arg-37, 58–60, 86–89, and Gln-93; these read NLV and GYPR. An LID region spans residues 127–137; that stretch reads GRAQEQGRTDD. ATP is bound at residue Arg-128. Residues Arg-134 and Arg-145 each contribute to the AMP site. Gly-173 serves as a coordination point for ATP.

This sequence belongs to the adenylate kinase family. Monomer.

It is found in the cytoplasm. It catalyses the reaction AMP + ATP = 2 ADP. The protein operates within purine metabolism; AMP biosynthesis via salvage pathway; AMP from ADP: step 1/1. Its function is as follows. Catalyzes the reversible transfer of the terminal phosphate group between ATP and AMP. Plays an important role in cellular energy homeostasis and in adenine nucleotide metabolism. The protein is Adenylate kinase of Kocuria rhizophila (strain ATCC 9341 / DSM 348 / NBRC 103217 / DC2201).